The primary structure comprises 526 residues: Fumitremorgin C synthase (526 aa).

A helical transmembrane segment spans residues 4 to 24 (LPLSPAVLFLIIVLPILYLWI). Residue C443 coordinates heme.

It belongs to the cytochrome P450 family. Heme serves as cofactor.

The protein resides in the membrane. It carries out the reaction tryprostatin A + reduced [NADPH--hemoprotein reductase] + O2 = fumitremorgin C + oxidized [NADPH--hemoprotein reductase] + 2 H2O + H(+). Its pathway is mycotoxin biosynthesis. Cytochrome P450 monooxygenase; part of the gene cluster that mediates the biosynthesis of fumitremorgins, indole alkaloids that carry not only intriguing chemical structures, but also interesting biological and pharmacological activities. The biosynthesis of fumitremorgin-type alkaloids begins by condensation of the two amino acids L-tryptophan and L-proline to brevianamide F, catalyzed by the non-ribosomal peptide synthetase ftmA. Brevianamide F is then prenylated by the prenyltransferase ftmPT1/ftmB in the presence of dimethylallyl diphosphate, resulting in the formation of tryprostatin B. The three cytochrome P450 monooxygenases, ftmP450-1/ftmC, ftmP450-2/ftmE and ftmP450-3/FtmG, are responsible for the conversion of tryprostatin B to 6-hydroxytryprostatin B, tryprostatin A to fumitremorgin C and fumitremorgin C to 12,13-dihydroxyfumitremorgin C, respectively. The putative methyltransferase ftmMT/ftmD is expected for the conversion of 6-hydroxytryprostatin B to tryprostatin A. FtmPT2/FtmH catalyzes the prenylation of 12,13-dihydroxyfumitre-morgin C in the presence of dimethylallyl diphosphate, resulting in the formation of fumitremorgin B. Fumitremorgin B is further converted to verruculogen by ftmOx1/ftmF via the insertion of an endoperoxide bond between the two prenyl moieties. In some fungal species, verruculogen is further converted to fumitremorgin A, but the enzymes involved in this step have not been identified yet. In Aspergillus fumigatus (Neosartorya fumigata), this protein is Fumitremorgin C synthase.